The primary structure comprises 313 residues: Sororin-like protein 1 (313 aa).

The FGF motif motif lies at 44-46; the sequence is FGF. A disordered region spans residues 105–287; sequence ADENQQSVPT…NDNLKELTPG (183 aa). The span at 107 to 118 shows a compositional bias: polar residues; it reads ENQQSVPTVSIA. Positions 123–134 are enriched in pro residues; the sequence is PELPPSSSPLLP. Residues 135 to 154 show a composition bias toward low complexity; the sequence is PNGSESSSPIPLSLLSTSSL. Polar residues predominate over residues 155–170; it reads QQRKITPSNLSNTSKP. Residues 184-196 show a composition bias toward basic residues; sequence HGHHLTRLRKKRR. Over residues 249–264 the composition is skewed to basic and acidic residues; that stretch reads EKKILKTYHSQDKDTA. Residues 288–310 are C-terminal Sororin domain; it reads KKEYLKSIKKYFQDVDDYQLHVV.

It belongs to the sororin family. Interacts with Pds5 and Psm3.

It is found in the nucleus. Functionally, regulator of sister chromatid cohesion in mitosis stabilizing cohesin complex association with chromatin. Antagonizes the action of wpl1 which stimulates cohesin dissociation from chromatin. Cohesion ensures that chromosome partitioning is accurate in dividing cells and may play an important role in DNA repair. This Schizosaccharomyces pombe (strain 972 / ATCC 24843) (Fission yeast) protein is Sororin-like protein 1.